The sequence spans 523 residues: NAD(P)H-quinone oxidoreductase subunit 2 (523 aa).

14 consecutive transmembrane segments (helical) span residues 29-49 (AIAP…VDLA), 57-77 (WVPP…AQQW), 94-114 (LAIA…LISW), 123-143 (PIGE…LLCG), 147-167 (LVSV…LAGY), 182-202 (LLVG…LYGL), 221-243 (PLAA…AVPF), 255-275 (PTPV…ALAL), 291-311 (LLFT…ALAQ), 317-337 (MLAY…VCGT), 345-365 (VLYM…IILF), 389-409 (LGLS…GFFG), 424-444 (LLVV…ISVI), and 477-497 (IALV…NPLF).

The protein belongs to the complex I subunit 2 family. As to quaternary structure, NDH-1 can be composed of about 15 different subunits; different subcomplexes with different compositions have been identified which probably have different functions.

It localises to the cellular thylakoid membrane. The enzyme catalyses a plastoquinone + NADH + (n+1) H(+)(in) = a plastoquinol + NAD(+) + n H(+)(out). It catalyses the reaction a plastoquinone + NADPH + (n+1) H(+)(in) = a plastoquinol + NADP(+) + n H(+)(out). NDH-1 shuttles electrons from an unknown electron donor, via FMN and iron-sulfur (Fe-S) centers, to quinones in the respiratory and/or the photosynthetic chain. The immediate electron acceptor for the enzyme in this species is believed to be plastoquinone. Couples the redox reaction to proton translocation, and thus conserves the redox energy in a proton gradient. Cyanobacterial NDH-1 also plays a role in inorganic carbon-concentration. This chain is NAD(P)H-quinone oxidoreductase subunit 2, found in Prochlorococcus marinus (strain MIT 9303).